The primary structure comprises 145 residues: Arginine repressor (145 aa).

It belongs to the ArgR family.

The protein resides in the cytoplasm. It functions in the pathway amino-acid biosynthesis; L-arginine biosynthesis [regulation]. Functionally, regulates arginine biosynthesis genes. The protein is Arginine repressor of Solibacter usitatus (strain Ellin6076).